Consider the following 343-residue polypeptide: Photosystem II protein D1 (343 aa).

3 helical membrane passes run 28-45 (YIGW…VSTV), 117-132 (HFLA…EYEY), and 141-155 (WIYL…AASA). Histidine 117 contacts chlorophyll a. Residue tryptophan 125 participates in pheophytin a binding. Residues aspartate 169 and glutamate 188 each contribute to the [CaMn4O5] cluster site. The helical transmembrane segment at 196 to 217 (FHILGVSAVFGGSLFSAMHGSL) threads the bilayer. A chlorophyll a-binding site is contributed by histidine 197. Residues histidine 214 and 263–264 (SF) contribute to the a quinone site. A Fe cation-binding site is contributed by histidine 214. A Fe cation-binding site is contributed by histidine 271. Residues 273–287 (FLAAWPVIGIWCTAI) form a helical membrane-spanning segment. Positions 331, 332, 341, and 343 each coordinate [CaMn4O5] cluster.

The protein belongs to the reaction center PufL/M/PsbA/D family. In terms of assembly, PSII is composed of 1 copy each of membrane proteins PsbA, PsbB, PsbC, PsbD, PsbE, PsbF, PsbH, PsbI, PsbJ, PsbK, PsbL, PsbM, PsbT, PsbX, PsbY, PsbZ, Psb30/Ycf12, at least 3 peripheral proteins of the oxygen-evolving complex and a large number of cofactors. It forms dimeric complexes. Requires The D1/D2 heterodimer binds P680, chlorophylls that are the primary electron donor of PSII, and subsequent electron acceptors. It shares a non-heme iron and each subunit binds pheophytin, quinone, additional chlorophylls, carotenoids and lipids. D1 provides most of the ligands for the Mn4-Ca-O5 cluster of the oxygen-evolving complex (OEC). There is also a Cl(-1) ion associated with D1 and D2, which is required for oxygen evolution. The PSII complex binds additional chlorophylls, carotenoids and specific lipids. as cofactor. In terms of processing, tyr-160 forms a radical intermediate that is referred to as redox-active TyrZ, YZ or Y-Z.

Its subcellular location is the plastid. It is found in the chloroplast thylakoid membrane. The catalysed reaction is 2 a plastoquinone + 4 hnu + 2 H2O = 2 a plastoquinol + O2. Its function is as follows. Photosystem II (PSII) is a light-driven water:plastoquinone oxidoreductase that uses light energy to abstract electrons from H(2)O, generating O(2) and a proton gradient subsequently used for ATP formation. It consists of a core antenna complex that captures photons, and an electron transfer chain that converts photonic excitation into a charge separation. The D1/D2 (PsbA/PsbD) reaction center heterodimer binds P680, the primary electron donor of PSII as well as several subsequent electron acceptors. The polypeptide is Photosystem II protein D1 (Prorocentrum micans (Red tide dinoflagellate)).